The following is a 177-amino-acid chain: Large ribosomal subunit protein uL6 (177 aa).

Belongs to the universal ribosomal protein uL6 family. Part of the 50S ribosomal subunit.

Its function is as follows. This protein binds to the 23S rRNA, and is important in its secondary structure. It is located near the subunit interface in the base of the L7/L12 stalk, and near the tRNA binding site of the peptidyltransferase center. This chain is Large ribosomal subunit protein uL6, found in Chelativorans sp. (strain BNC1).